A 688-amino-acid polypeptide reads, in one-letter code: Zinc finger and BTB domain-containing protein 48 (688 aa).

One can recognise a BTB domain in the interval 26–89 (CDATLDVGGL…FYTGHLALTS (64 aa)). The interval 119–140 (SVGQAAGGQSGLGPPASQNVNS) is disordered. A Glycyl lysine isopeptide (Lys-Gly) (interchain with G-Cter in SUMO2) cross-link involves residue Lys143. The disordered stretch occupies residues 161-192 (PRDQEPRGSHSPQRPQLHSPAQSEGPSSLCGK). Phosphoserine is present on residues Ser169, Ser171, and Ser179. The span at 170–186 (HSPQRPQLHSPAQSEGP) shows a compositional bias: polar residues. Lys263 is covalently cross-linked (Glycyl lysine isopeptide (Lys-Gly) (interchain with G-Cter in SUMO2)). Residues 291-313 (VECPTCHKKFLSKYYLKVHNRKH) form a C2H2-type 1 zinc finger. 16 residues coordinate Zn(2+): Cys293, Cys296, His309, His313, Cys321, Cys324, His337, Cys342, Cys352, Cys355, His368, His372, Cys380, Cys383, His396, and His401. A CCHC-type zinc finger spans residues 319–344 (FECPKCGKCYFRKENLLEHEARNCMN). C2H2-type zinc fingers lie at residues 350-372 (FTCS…MVSH), 378-401 (YKCS…IKLH), 407-430 (HACP…AFKH), 436-459 (FVCE…KAKH), 465-487 (HVCE…LRTH), 493-515 (FQCH…NRTH), 521-544 (FSCE…ASRH), 550-572 (HFCQ…VRRH), and 578-600 (FECT…MEIH). Residues Cys552, Cys555, His568, Cys580, Cys583, His596, and His600 each contribute to the Zn(2+) site.

Belongs to the krueppel C2H2-type zinc-finger protein family. In terms of assembly, interacts with EP300. As to expression, detected in adrenal gland and neuroblastoma.

It is found in the nucleus. The protein localises to the chromosome. The protein resides in the telomere. Functionally, plays a critical role in transcriptional regulation and chromatin remodeling. Acts as a regulator of telomere length. Directly binds the telomeric double-stranded 5'-TTAGGG-3' repeat. Preferentially binds to telomeres that have a low concentration of shelterin complex and acts as a regulator of telomere length by initiating telomere trimming, a process that prevents the accumulation of aberrantly long telomeres. Also acts as a transcription regulator that binds to promoter regions. Regulates expression of a small subset of genes, including MTFP1. Acts as a negative regulator of cell proliferation by specifically activating expression of ARF, a tumor suppressor isoform of CDKN2A. Acts as a transcription regulator of CIITA, the major factor regulating MHC class II gene expression. In addition, regulates cellular m6A/m6Am methylation on RNA by facilitating the recruitment of the RNA demethylase, FTO, to target mRNAs. The polypeptide is Zinc finger and BTB domain-containing protein 48 (Homo sapiens (Human)).